The primary structure comprises 204 residues: Ras-related protein Rab-7L1 (204 aa).

GTP contacts are provided by S33, K34, H35, Y36, K37, and T39. The Effector region signature appears at 36–44 (YKSTVGVDF). The residue at position 71 (T71) is a Phosphothreonine; by LRRK2. At S72 the chain carries Phosphoserine. GTP-binding residues include K126, V156, and K157. 2 S-geranylgeranyl cysteine lipidation sites follow: C203 and C204.

Belongs to the small GTPase superfamily. Rab family. In terms of assembly, interacts with LRRK2 (via the N-terminus); this interaction is direct and stimulates kinase activity.

Its subcellular location is the cell membrane. It localises to the cytoplasm. It is found in the perinuclear region. The protein resides in the golgi apparatus. The protein localises to the golgi apparatus membrane. Its subcellular location is the trans-Golgi network. It localises to the cytoskeleton. The small GTPases Rab are key regulators in vesicle trafficking. Essential for maintaining the integrity of endosome-trans-Golgi network structure. Together with LRRK2, plays a role in the retrograde trafficking pathway for recycling proteins, such as mannose 6 phosphate receptor (M6PR), between lysosomes and the Golgi apparatus in a retromer-dependent manner. Recruits LRRK2 to the Golgi apparatus and stimulates LRRK2 kinase activity. Stimulates phosphorylation of RAB10 'Thr-73' by LRRK2. Also regulates neuronal process morphology in the intact central nervous system (CNS). The protein is Ras-related protein Rab-7L1 (Rab29) of Mus musculus (Mouse).